A 283-amino-acid chain; its full sequence is Trafficking protein particle complex subunit 31 (283 aa).

Residues 1–16 (MSQRIIQPSASDQQFP) are compositionally biased toward polar residues. 2 disordered regions span residues 1-20 (MSQR…GKSD) and 126-156 (SSKL…RLQE). Positions 126–151 (SSKLSNASNSPGMLANSSTATSASAN) are enriched in low complexity.

The protein belongs to the TRAPP small subunits family. BET3 subfamily. As to quaternary structure, part of the multisubunit TRAPP (transport protein particle) I complex composed of BET3, BET5, TRS20, TRS23, TRS31 and TRS33. Part of the multisubunit TRAPP (transport protein particle) II complex composed of BET3, BET5, TRS20, TRS23, TRS31, TRS33, TRS65, TRS85, TRS120 and TRS130. Part of the multisubunit TRAPP (transport protein particle) III complex composed of BET3, BET5, TRS20, TRS23, TRS31, TRS33 and TRS85.

It is found in the golgi apparatus. It localises to the cis-Golgi network. The protein resides in the endoplasmic reticulum. Its subcellular location is the preautophagosomal structure. Functionally, component of the TRAPP I, TRAPP II and TRAPP III complexes which act as guanine nucleotide exchange factors (GEF) for YPT1. TRAPP I plays a key role in the late stages of endoplasmic reticulum to Golgi traffic. TRAPP II plays a role in intra-Golgi transport. TRAPP III plays a role in autophagosome formation. This Saccharomyces cerevisiae (strain ATCC 204508 / S288c) (Baker's yeast) protein is Trafficking protein particle complex subunit 31 (TRS31).